A 385-amino-acid polypeptide reads, in one-letter code: Serpin-Z10 (385 aa).

The segment at 333–357 is RCL; that stretch reads GTEAAAVSVGVVSCTSFRRNPDFVA.

This sequence belongs to the serpin family.

In terms of biological role, probable serine protease inhibitor. The polypeptide is Serpin-Z10 (Arabidopsis thaliana (Mouse-ear cress)).